The primary structure comprises 841 residues: Toll-like receptor 4 (841 aa).

The N-terminal stretch at 1–23 is a signal peptide; that stretch reads MIPRIRLAVATIPAMAFLSCLRS. Over 24 to 632 the chain is Extracellular; it reads ESWDPCVQVV…FRNATCQISE (609 aa). Residues C29 and C40 are joined by a disulfide bond. N-linked (GlcNAc...) asparagine glycosylation occurs at N35. LRR repeat units follow at residues 55 to 76, 79 to 100, 103 to 124, 127 to 148, 151 to 172, 176 to 197, and 205 to 225; these read SVKI…SFSS, ELQV…AYQG, YLST…AFSG, SLQK…PIGH, TLNE…EYFS, NLEH…HLQV, and NLSL…AFNK. N-linked (GlcNAc...) asparagine glycosylation is found at N205, N238, N282, and N309. A disulfide bond links C281 and C306. 8 LRR repeats span residues 374–395, 400–422, 423–444, 448–469, 472–495, 497–518, 521–542, and 545–568; these read NLQF…SHNE, KLKH…MGLE, QLEY…SIFL, NLHY…IFAG, SLQT…FTDL, NLIL…AFHS, RLQV…PYKP, and SLRI…QHLP. Cysteines 390 and 391 form a disulfide. N526 carries N-linked (GlcNAc...) asparagine glycosylation. N575 carries an N-linked (GlcNAc...) asparagine glycan. An LRRCT domain is found at 579 to 630; the sequence is NDFSCACEHQTFLQWVKDQKQLLVGAEQMVCTQPLEMQDLPVLSFRNATCQI. Disulfide bonds link C583/C609 and C585/C628. An N-linked (GlcNAc...) asparagine glycan is attached at N625. A helical transmembrane segment spans residues 633–653; the sequence is AVISASVLTFLLVSVAGILVY. At 654 to 841 the chain is on the cytoplasmic side; sequence KFYFHLLLFV…SNQHDTTAFT (188 aa). Positions 673-816 constitute a TIR domain; that stretch reads STYDAFVIYS…IFWRRLKKAL (144 aa).

It belongs to the Toll-like receptor family. Belongs to the lipopolysaccharide (LPS) receptor, a multi-protein complex containing at least CD14, LY96 and TLR4. Binding to bacterial LPS leads to homodimerization. Interacts with LY96 via the extracellular domain. Interacts with MYD88 and TIRAP via their respective TIR domains. Interacts with NOX4. Interacts with CNPY3 and HSP90B1; this interaction is required for proper folding in the endoplasmic reticulum. Interacts with MAP3K21; this interaction leads to negative regulation of TLR4 signaling. Interacts with CD36, following CD36 stimulation by oxLDL or amyloid-beta 42, and forms a heterodimer with TLR6. The trimeric complex is internalized and triggers inflammatory response. LYN kinase activity facilitates TLR4-TLR6 heterodimerization and signal initiation. Interacts with TICAM1 in response to LPS in a WDFY1-dependent manner. Interacts with WDFY1 in response to LPS. Interacts with SMPDL3B. Interacts with CEACAM1; upon lipopolysaccharide stimulation, forms a complex including TLR4 and the phosphorylated form of SYK and CEACAM1, which in turn, recruits PTPN6 that dephosphorylates SYK, reducing the production of reactive oxygen species (ROS) and lysosome disruption, which in turn, reduces the activity of the inflammasome. Interacts with RFTN1; the interaction occurs in response to lipopolysaccharide stimulation. Interacts with SCIMP; the interaction occurs in response to lipopolysaccharide stimulation and is enhanced by phosphorylation of SCIMP by LYN. This interaction facilitates the phosphorylation of TLR4 by LYN which elicits a selective cytokine response in macrophages. Interacts with TRAF3IP3. Interacts with TREM1; this interaction enhances TLR4-mediated inflammatory response. Interacts with ZG16B/PAUF. Interacts with CD82; this interaction inhibits TLR4-mediated signaling pathway. In terms of processing, phosphorylated on tyrosine residues by LYN after binding lipopolysaccharide. Ubiquitinated by RNF128 via 'Lys-28'-linked polyubiquitin chains, leading to proteasomal degradation.

The protein localises to the cell membrane. It localises to the early endosome. Its subcellular location is the cell projection. It is found in the ruffle. In terms of biological role, transmembrane receptor that functions as a pattern recognition receptor recognizing pathogen- and damage-associated molecular patterns (PAMPs and DAMPs) to induce innate immune responses via downstream signaling pathways. At the plasma membrane, cooperates with LY96 to mediate the innate immune response to bacterial lipopolysaccharide (LPS). Also involved in LPS-independent inflammatory responses triggered by free fatty acids, such as palmitate, and Ni(2+). Mechanistically, acts via MYD88, TIRAP and TRAF6, leading to NF-kappa-B activation, cytokine secretion and the inflammatory response. Alternatively, CD14-mediated TLR4 internalization via endocytosis is associated with the initiation of a MYD88-independent signaling via the TICAM1-TBK1-IRF3 axis leading to type I interferon production. In addition to the secretion of proinflammatory cytokines, initiates the activation of NLRP3 inflammasome and formation of a positive feedback loop between autophagy and NF-kappa-B signaling cascade. In complex with TLR6, promotes inflammation in monocytes/macrophages by associating with TLR6 and the receptor CD86. Upon ligand binding, such as oxLDL or amyloid-beta 42, the TLR4:TLR6 complex is internalized and triggers inflammatory response, leading to NF-kappa-B-dependent production of CXCL1, CXCL2 and CCL9 cytokines, via MYD88 signaling pathway, and CCL5 cytokine, via TICAM1 signaling pathway. In myeloid dendritic cells, vesicular stomatitis virus glycoprotein G but not LPS promotes the activation of IRF7, leading to type I IFN production in a CD14-dependent manner. This Sus scrofa (Pig) protein is Toll-like receptor 4 (TLR4).